The chain runs to 491 residues: MKNQDQALIFEMSKEGRVGYSLPQLDVEEVKLEDVFESNYIRAEDAELPEVSELDIMRHYTALSNRNHGVDSGFYPLGSCTMKYNPKINENVARFPGFANIHPLQDEKTVQGAMELMYDLQEHLVEITGMDAVTLQPAAGAHGEWTGLMLIRAYHEANGDHNRTKVIVPDSAHGTNPASATVAGFETITVKSNEHGLVDLEDLKRVVNEETAALMLTNPNTLGLFEENILEMAEIVHNAGGKLYYDGANLNAVLSQARPGDMGFDVVHLNLHKTFTGPHGGGGPGSGPVGVKEDLIPFLPKPILEKTENGYHFNYDRPQAIGRVKPFYGNFGINVRAYTYIRSMGPDGLRAVTENAVLNANYMMRRLAPYYDLPFDRHCKHEFVLSGRCQKKLGVRTLDIAKRLLDFGYHPPTIYFPLNVEECIMIEPTETESKETLDGFIDKMIQIAKEAKENPEIVQEAPHTTVITRLDETMAARKPILRYQKPTPVQV.

Position 273 is an N6-(pyridoxal phosphate)lysine (lysine 273).

It belongs to the GcvP family. C-terminal subunit subfamily. In terms of assembly, the glycine cleavage system is composed of four proteins: P, T, L and H. In this organism, the P 'protein' is a heterodimer of two subunits. Pyridoxal 5'-phosphate serves as cofactor.

The enzyme catalyses N(6)-[(R)-lipoyl]-L-lysyl-[glycine-cleavage complex H protein] + glycine + H(+) = N(6)-[(R)-S(8)-aminomethyldihydrolipoyl]-L-lysyl-[glycine-cleavage complex H protein] + CO2. In terms of biological role, the glycine cleavage system catalyzes the degradation of glycine. The P protein binds the alpha-amino group of glycine through its pyridoxal phosphate cofactor; CO(2) is released and the remaining methylamine moiety is then transferred to the lipoamide cofactor of the H protein. This is Probable glycine dehydrogenase (decarboxylating) subunit 2 from Bacillus cytotoxicus (strain DSM 22905 / CIP 110041 / 391-98 / NVH 391-98).